The chain runs to 263 residues: Small ribosomal subunit protein eS1 (263 aa).

Basic and acidic residues predominate over residues 235-254 (HGEGGGGKREAGDKSERPEG). Positions 235–263 (HGEGGGGKREAGDKSERPEGYEPPVQESV) are disordered.

Belongs to the eukaryotic ribosomal protein eS1 family. Component of the small ribosomal subunit. Mature ribosomes consist of a small (40S) and a large (60S) subunit. The 40S subunit contains about 33 different proteins and 1 molecule of RNA (18S). The 60S subunit contains about 49 different proteins and 3 molecules of RNA (28S, 5.8S and 5S).

Its subcellular location is the cytoplasm. In Bombyx mandarina (Wild silk moth), this protein is Small ribosomal subunit protein eS1.